Consider the following 149-residue polypeptide: Large ribosomal subunit protein bL9 (149 aa).

Belongs to the bacterial ribosomal protein bL9 family.

Functionally, binds to the 23S rRNA. The polypeptide is Large ribosomal subunit protein bL9 (Citrobacter koseri (strain ATCC BAA-895 / CDC 4225-83 / SGSC4696)).